Reading from the N-terminus, the 467-residue chain is Receptor-like cytosolic serine/threonine-protein kinase RBK1 (467 aa).

The segment covering 1-24 has biased composition (basic and acidic residues); it reads MAVEDNKNSESKNHQEVELHRNDL. The interval 1 to 73 is disordered; sequence MAVEDNKNSE…PFSNTTKTVS (73 aa). Positions 40 to 71 are enriched in low complexity; sequence SDSDNSSSSCSSCSSDDKSSSTSSPFSNTTKT. Position 142 is a phosphothreonine (threonine 142). The 278-residue stretch at 153 to 430 folds into the Protein kinase domain; sequence FNPENMIGKG…LRGEDGPAEL (278 aa). Residues 159–167 and lysine 181 contribute to the ATP site; that span reads IGKGGHAEV. The active-site Proton acceptor is aspartate 278. Residue serine 282 is modified to Phosphoserine. The residue at position 318 (threonine 318) is a Phosphothreonine. Residue tyrosine 326 is modified to Phosphotyrosine.

Belongs to the protein kinase superfamily. Ser/Thr protein kinase family. In terms of assembly, interacts with ARAC5 and ARAC10. As to expression, mostly expressed in vasculature, hydathode endothem, leaf mesophyll cells and trichomes.

It localises to the cytoplasm. The protein localises to the endomembrane system. It is found in the nucleus. The catalysed reaction is L-seryl-[protein] + ATP = O-phospho-L-seryl-[protein] + ADP + H(+). It carries out the reaction L-threonyl-[protein] + ATP = O-phospho-L-threonyl-[protein] + ADP + H(+). The sequence is that of Receptor-like cytosolic serine/threonine-protein kinase RBK1 (RBK1) from Arabidopsis thaliana (Mouse-ear cress).